We begin with the raw amino-acid sequence, 81 residues long: Cytochrome b559 subunit alpha (81 aa).

Residues Arg-18 and His-23 each contribute to the heme site. The helical transmembrane segment at 19-40 (YWVIHSITIPMLFIAGWLFVST) threads the bilayer.

Belongs to the PsbE/PsbF family. As to quaternary structure, heterodimer of an alpha subunit and a beta subunit. PSII is composed of 1 copy each of membrane proteins PsbA, PsbB, PsbC, PsbD, PsbE, PsbF, PsbH, PsbI, PsbJ, PsbK, PsbL, PsbM, PsbT, PsbX, PsbY, PsbZ, Psb30/Ycf12, peripheral proteins PsbO, CyanoQ (PsbQ), PsbU, PsbV and a large number of cofactors. It forms dimeric complexes. The cofactor is heme b.

It localises to the cellular thylakoid membrane. Functionally, this b-type cytochrome is tightly associated with the reaction center of photosystem II (PSII). PSII is a light-driven water:plastoquinone oxidoreductase that uses light energy to abstract electrons from H(2)O, generating O(2) and a proton gradient subsequently used for ATP formation. It consists of a core antenna complex that captures photons, and an electron transfer chain that converts photonic excitation into a charge separation. The sequence is that of Cytochrome b559 subunit alpha from Synechocystis sp. (strain ATCC 27184 / PCC 6803 / Kazusa).